Here is a 171-residue protein sequence, read N- to C-terminus: 3-hydroxydecanoyl-[acyl-carrier-protein] dehydratase (171 aa).

H71 is a catalytic residue.

It belongs to the thioester dehydratase family. FabA subfamily. Homodimer.

It localises to the cytoplasm. The catalysed reaction is a (3R)-hydroxyacyl-[ACP] = a (2E)-enoyl-[ACP] + H2O. It carries out the reaction (3R)-hydroxydecanoyl-[ACP] = (2E)-decenoyl-[ACP] + H2O. It catalyses the reaction (2E)-decenoyl-[ACP] = (3Z)-decenoyl-[ACP]. It participates in lipid metabolism; fatty acid biosynthesis. Functionally, necessary for the introduction of cis unsaturation into fatty acids. Catalyzes the dehydration of (3R)-3-hydroxydecanoyl-ACP to E-(2)-decenoyl-ACP and then its isomerization to Z-(3)-decenoyl-ACP. Can catalyze the dehydratase reaction for beta-hydroxyacyl-ACPs with saturated chain lengths up to 16:0, being most active on intermediate chain length. This is 3-hydroxydecanoyl-[acyl-carrier-protein] dehydratase from Rhizobium meliloti (strain 1021) (Ensifer meliloti).